The following is a 395-amino-acid chain: Putative nickel insertion protein (395 aa).

The protein belongs to the LarC family.

The protein is Putative nickel insertion protein of Roseiflexus castenholzii (strain DSM 13941 / HLO8).